A 491-amino-acid chain; its full sequence is Cobyric acid synthase (491 aa).

The GATase cobBQ-type domain occupies 253–429 (AHRVAVVRLP…WHGSLEGDAL (177 aa)). Catalysis depends on cysteine 334, which acts as the Nucleophile. Histidine 421 is an active-site residue.

The protein belongs to the CobB/CobQ family. CobQ subfamily.

The protein operates within cofactor biosynthesis; adenosylcobalamin biosynthesis. Catalyzes amidations at positions B, D, E, and G on adenosylcobyrinic A,C-diamide. NH(2) groups are provided by glutamine, and one molecule of ATP is hydrogenolyzed for each amidation. The polypeptide is Cobyric acid synthase (Mycobacterium ulcerans (strain Agy99)).